Reading from the N-terminus, the 513-residue chain is DNA damage-binding protein CMR1 (513 aa).

The span at 35-45 (RSEAGIEDHRK) shows a compositional bias: basic and acidic residues. The tract at residues 35–103 (RSEAGIEDHR…TAQNVKQEEE (69 aa)) is disordered. WD repeat units follow at residues 183–224 (IVHE…PDPE), 237–277 (LFSR…SDEL), 329–369 (LSDK…AKPD), 386–425 (NSRLSVSAVSYAPIDHTLVCNGYDNTVRLFNARADLPSEL), 438–477 (GRWVSVLKARFKLNMDVFAIANMKRAIDIYTSRGEQLSHL), and 478–513 (ETSTVPAVVSWHPMQNWIVGGNNSGKVFLFTDAPQE).

The protein belongs to the WD repeat DDB2/WDR76 family.

In terms of biological role, DNA-binding protein that binds to both single- and double-stranded DNA. Binds preferentially to UV-damaged DNA. May be involved in DNA-metabolic processes. The sequence is that of DNA damage-binding protein CMR1 from Eremothecium gossypii (strain ATCC 10895 / CBS 109.51 / FGSC 9923 / NRRL Y-1056) (Yeast).